We begin with the raw amino-acid sequence, 215 residues long: Virulence protein YscR (215 aa).

4 helical membrane-spanning segments follow: residues 10 to 30 (LIGILFLLSILPLIIVMGTSF), 53 to 73 (IALYGLALVLSLFIMGPTLLA), 156 to 176 (IGLLIYLPFLAIDLLISNILL), and 188 to 208 (ISLPFKLLIFLLAGGWDLTLA).

It belongs to the FliP/MopC/SpaP family.

The protein localises to the cell membrane. The protein is Virulence protein YscR (yscR) of Salmonella typhimurium (strain LT2 / SGSC1412 / ATCC 700720).